The sequence spans 411 residues: Na(+)-translocating NADH-quinone reductase subunit B (411 aa).

Transmembrane regions (helical) follow at residues 56–76 (IMIT…YNAG), 121–141 (FLPI…LFAV), and 161–181 (ILPA…GVVI). FMN phosphoryl threonine is present on threonine 228. The next 5 helical transmembrane spans lie at 254 to 274 (FIPG…AAVL), 284 to 304 (IMLG…AIGS), 309 to 329 (MFGM…GMVF), 345 to 365 (LLFG…NPAF), and 368 to 388 (GIML…HFFV).

It belongs to the NqrB/RnfD family. Composed of six subunits; NqrA, NqrB, NqrC, NqrD, NqrE and NqrF. FMN serves as cofactor.

The protein localises to the cell inner membrane. The catalysed reaction is a ubiquinone + n Na(+)(in) + NADH + H(+) = a ubiquinol + n Na(+)(out) + NAD(+). NQR complex catalyzes the reduction of ubiquinone-1 to ubiquinol by two successive reactions, coupled with the transport of Na(+) ions from the cytoplasm to the periplasm. NqrA to NqrE are probably involved in the second step, the conversion of ubisemiquinone to ubiquinol. The polypeptide is Na(+)-translocating NADH-quinone reductase subunit B (Chromohalobacter salexigens (strain ATCC BAA-138 / DSM 3043 / CIP 106854 / NCIMB 13768 / 1H11)).